We begin with the raw amino-acid sequence, 530 residues long: Apolipoprotein N-acyltransferase (530 aa).

Helical transmembrane passes span 19–39, 65–85, 96–116, 128–148, 169–189, and 197–217; these read LIAG…PGLL, WLAG…AFLV, FAVT…ALLY, LTFA…LTGF, LVGA…PAVW, and AATG…AIAL. The region spanning 232 to 485 is the CN hydrolase domain; the sequence is VQADIKQDLK…SGVIDAQIPG (254 aa). The active-site Proton acceptor is the Glu274. Lys343 is an active-site residue. Cys396 functions as the Nucleophile in the catalytic mechanism.

The protein belongs to the CN hydrolase family. Apolipoprotein N-acyltransferase subfamily.

The protein resides in the cell inner membrane. The catalysed reaction is N-terminal S-1,2-diacyl-sn-glyceryl-L-cysteinyl-[lipoprotein] + a glycerophospholipid = N-acyl-S-1,2-diacyl-sn-glyceryl-L-cysteinyl-[lipoprotein] + a 2-acyl-sn-glycero-3-phospholipid + H(+). It participates in protein modification; lipoprotein biosynthesis (N-acyl transfer). Catalyzes the phospholipid dependent N-acylation of the N-terminal cysteine of apolipoprotein, the last step in lipoprotein maturation. This chain is Apolipoprotein N-acyltransferase, found in Caulobacter vibrioides (strain ATCC 19089 / CIP 103742 / CB 15) (Caulobacter crescentus).